The following is a 180-amino-acid chain: Inner membrane-spanning protein YciB (180 aa).

5 helical membrane passes run 22–42 (IFVASGALIVATLLALAFTWF), 50–70 (MTLVTAIMVLVFGTLTLAFHS), 72–92 (LFIKWKVTVLYVLFAVALLVS), 121–141 (MSWAVFFLVCGLLNIYVAFWL), and 149–169 (FKVFGLTALTLVFTLISGVYI).

This sequence belongs to the YciB family.

Its subcellular location is the cell inner membrane. Plays a role in cell envelope biogenesis, maintenance of cell envelope integrity and membrane homeostasis. The polypeptide is Inner membrane-spanning protein YciB (Yersinia enterocolitica serotype O:8 / biotype 1B (strain NCTC 13174 / 8081)).